The sequence spans 264 residues: Teichoic acids export ATP-binding protein TagH (264 aa).

Residues 5–243 enclose the ABC transporter domain; that stretch reads VNIKNVTKEY…YEAFLNDFKK (239 aa). 57 to 64 contributes to the ATP binding site; the sequence is GINGSGKS.

This sequence belongs to the ABC transporter superfamily. Teichoic acids exporter (TC 3.A.1.104.1) family. The complex is composed of two ATP-binding proteins (TagH) and two transmembrane proteins (TagG).

It is found in the cell membrane. The catalysed reaction is ATP + H2O + teichoic acidSide 1 = ADP + phosphate + teichoic acidSide 2.. Part of the ABC transporter complex TagGH involved in teichoic acids export. Responsible for energy coupling to the transport system. The sequence is that of Teichoic acids export ATP-binding protein TagH from Staphylococcus aureus (strain Mu50 / ATCC 700699).